The sequence spans 150 residues: D-aminoacyl-tRNA deacylase (150 aa).

Positions 137–138 (GP) match the Gly-cisPro motif, important for rejection of L-amino acids motif.

The protein belongs to the DTD family. Homodimer.

The protein localises to the cytoplasm. It catalyses the reaction glycyl-tRNA(Ala) + H2O = tRNA(Ala) + glycine + H(+). The catalysed reaction is a D-aminoacyl-tRNA + H2O = a tRNA + a D-alpha-amino acid + H(+). An aminoacyl-tRNA editing enzyme that deacylates mischarged D-aminoacyl-tRNAs. Also deacylates mischarged glycyl-tRNA(Ala), protecting cells against glycine mischarging by AlaRS. Acts via tRNA-based rather than protein-based catalysis; rejects L-amino acids rather than detecting D-amino acids in the active site. By recycling D-aminoacyl-tRNA to D-amino acids and free tRNA molecules, this enzyme counteracts the toxicity associated with the formation of D-aminoacyl-tRNA entities in vivo and helps enforce protein L-homochirality. This Alkalilimnicola ehrlichii (strain ATCC BAA-1101 / DSM 17681 / MLHE-1) protein is D-aminoacyl-tRNA deacylase.